We begin with the raw amino-acid sequence, 314 residues long: Thymidylate synthase (314 aa).

DUMP contacts are provided by residues Arg32 and 176-177; that span reads RR. The active-site Nucleophile is Cys196. DUMP is bound by residues 216–219, Asn227, and 257–259; these read RSCD and HLY. Asp219 provides a ligand contact to (6R)-5,10-methylene-5,6,7,8-tetrahydrofolate. Ala313 serves as a coordination point for (6R)-5,10-methylene-5,6,7,8-tetrahydrofolate.

This sequence belongs to the thymidylate synthase family. Bacterial-type ThyA subfamily. In terms of assembly, homodimer.

It is found in the cytoplasm. It catalyses the reaction dUMP + (6R)-5,10-methylene-5,6,7,8-tetrahydrofolate = 7,8-dihydrofolate + dTMP. Its pathway is pyrimidine metabolism; dTTP biosynthesis. In terms of biological role, catalyzes the reductive methylation of 2'-deoxyuridine-5'-monophosphate (dUMP) to 2'-deoxythymidine-5'-monophosphate (dTMP) while utilizing 5,10-methylenetetrahydrofolate (mTHF) as the methyl donor and reductant in the reaction, yielding dihydrofolate (DHF) as a by-product. This enzymatic reaction provides an intracellular de novo source of dTMP, an essential precursor for DNA biosynthesis. The chain is Thymidylate synthase from Novosphingobium aromaticivorans (strain ATCC 700278 / DSM 12444 / CCUG 56034 / CIP 105152 / NBRC 16084 / F199).